The following is a 339-amino-acid chain: Lipopolysaccharide 1,2-glucosyltransferase (339 aa).

UDP contacts are provided by residues 35–40 (GIDENY) and 132–133 (DA). Residues Asp132 and Asp134 each coordinate Mg(2+). Short sequence motifs (DXD) lie at residues 132–134 (DAD) and 219–221 (DQD). Position 268 (His268) interacts with Mg(2+). 268-274 (HYTGITK) is a binding site for UDP.

It belongs to the glycosyltransferase 8 family. Mg(2+) serves as cofactor.

Its subcellular location is the cell inner membrane. The catalysed reaction is UDP-glucose + [lipopolysaccharide] = UDP + D-glucosyl-[lipopolysaccharide].. It functions in the pathway bacterial outer membrane biogenesis; LPS core biosynthesis. Glucosyltransferase involved in the biosynthesis of the core oligosaccharide region of lipopolysaccharide (LPS). Catalyzes the addition of a glucose (glucose II) to the outer-core galactose I. Has a marked preference for its specific donor substrate, but it appears to have a relaxed specificity for alternate LPS acceptor residues, providing the overall size of the acceptor is conserved. This Escherichia coli protein is Lipopolysaccharide 1,2-glucosyltransferase.